A 138-amino-acid polypeptide reads, in one-letter code: Sec-independent protein translocase protein TatB (138 aa).

The chain crosses the membrane as a helical span at residues 1-21; that stretch reads MFDIGFSELLLIAVVALVVLG. The disordered stretch occupies residues 116–138; that stretch reads VHHVHVPPPSTSTHGNNGQEKSQ. The segment covering 126–138 has biased composition (polar residues); sequence TSTHGNNGQEKSQ.

This sequence belongs to the TatB family. The Tat system comprises two distinct complexes: a TatABC complex, containing multiple copies of TatA, TatB and TatC subunits, and a separate TatA complex, containing only TatA subunits. Substrates initially bind to the TatABC complex, which probably triggers association of the separate TatA complex to form the active translocon.

Its subcellular location is the cell inner membrane. In terms of biological role, part of the twin-arginine translocation (Tat) system that transports large folded proteins containing a characteristic twin-arginine motif in their signal peptide across membranes. Together with TatC, TatB is part of a receptor directly interacting with Tat signal peptides. TatB may form an oligomeric binding site that transiently accommodates folded Tat precursor proteins before their translocation. This chain is Sec-independent protein translocase protein TatB, found in Xylella fastidiosa (strain Temecula1 / ATCC 700964).